Consider the following 380-residue polypeptide: Cytochrome b (380 aa).

The next 4 membrane-spanning stretches (helical) occupy residues 33–53 (FGSL…FLAM), 77–98 (WMIR…FLHI), 113–133 (WNIG…GYVL), and 178–198 (FFTL…LHLL). Heme b contacts are provided by His83 and His97. 2 residues coordinate heme b: His182 and His196. His201 lines the a ubiquinone pocket. The next 4 membrane-spanning stretches (helical) occupy residues 226 to 246 (IKDI…TLLS), 288 to 308 (LGGV…PALH), 320 to 340 (LSQF…WIGG), and 347 to 367 (FITI…LLMP).

It belongs to the cytochrome b family. In terms of assembly, the cytochrome bc1 complex contains 11 subunits: 3 respiratory subunits (MT-CYB, CYC1 and UQCRFS1), 2 core proteins (UQCRC1 and UQCRC2) and 6 low-molecular weight proteins (UQCRH/QCR6, UQCRB/QCR7, UQCRQ/QCR8, UQCR10/QCR9, UQCR11/QCR10 and a cleavage product of UQCRFS1). This cytochrome bc1 complex then forms a dimer. Heme b serves as cofactor.

It is found in the mitochondrion inner membrane. In terms of biological role, component of the ubiquinol-cytochrome c reductase complex (complex III or cytochrome b-c1 complex) that is part of the mitochondrial respiratory chain. The b-c1 complex mediates electron transfer from ubiquinol to cytochrome c. Contributes to the generation of a proton gradient across the mitochondrial membrane that is then used for ATP synthesis. The protein is Cytochrome b (MT-CYB) of Pongo abelii (Sumatran orangutan).